A 176-amino-acid polypeptide reads, in one-letter code: N5-carboxyaminoimidazole ribonucleotide mutase (176 aa).

Residues serine 14, aspartate 17, and arginine 44 each coordinate substrate.

It belongs to the AIR carboxylase family. Class I subfamily.

It carries out the reaction 5-carboxyamino-1-(5-phospho-D-ribosyl)imidazole + H(+) = 5-amino-1-(5-phospho-D-ribosyl)imidazole-4-carboxylate. It functions in the pathway purine metabolism; IMP biosynthesis via de novo pathway; 5-amino-1-(5-phospho-D-ribosyl)imidazole-4-carboxylate from 5-amino-1-(5-phospho-D-ribosyl)imidazole (N5-CAIR route): step 2/2. Its function is as follows. Catalyzes the conversion of N5-carboxyaminoimidazole ribonucleotide (N5-CAIR) to 4-carboxy-5-aminoimidazole ribonucleotide (CAIR). The chain is N5-carboxyaminoimidazole ribonucleotide mutase from Synechocystis sp. (strain ATCC 27184 / PCC 6803 / Kazusa).